A 155-amino-acid polypeptide reads, in one-letter code: Arginine repressor (155 aa).

The protein belongs to the ArgR family.

Its subcellular location is the cytoplasm. It functions in the pathway amino-acid biosynthesis; L-arginine biosynthesis [regulation]. In terms of biological role, regulates arginine biosynthesis genes. The sequence is that of Arginine repressor from Histophilus somni (strain 2336) (Haemophilus somnus).